We begin with the raw amino-acid sequence, 139 residues long: Small ribosomal subunit protein uS12 (139 aa).

Residues 1 to 21 (MSTVSQLIKKRRSSKTSKTKA) are disordered. A compositionally biased stretch (basic residues) spans 8–18 (IKKRRSSKTSK).

Belongs to the universal ribosomal protein uS12 family. As to quaternary structure, part of the 30S ribosomal subunit. Contacts proteins S8 and S17. May interact with IF1 in the 30S initiation complex.

With S4 and S5 plays an important role in translational accuracy. Its function is as follows. Interacts with and stabilizes bases of the 16S rRNA that are involved in tRNA selection in the A site and with the mRNA backbone. Located at the interface of the 30S and 50S subunits, it traverses the body of the 30S subunit contacting proteins on the other side and probably holding the rRNA structure together. The combined cluster of proteins S8, S12 and S17 appears to hold together the shoulder and platform of the 30S subunit. This is Small ribosomal subunit protein uS12 from Onion yellows phytoplasma (strain OY-M).